The following is a 353-amino-acid chain: Photosystem II protein D1 (353 aa).

T2 is modified (N-acetylthreonine). T2 carries the post-translational modification Phosphothreonine. The next 3 helical transmembrane spans lie at 29-46 (YIGW…TATS), 118-133 (HFLL…EWEL), and 142-156 (WIAV…AATA). H118 lines the chlorophyll a pocket. Y126 provides a ligand contact to pheophytin a. Positions 170 and 189 each coordinate [CaMn4O5] cluster. Residues 197–218 (FHMLGVAGVFGGSLFSAMHGSL) traverse the membrane as a helical segment. Chlorophyll a is bound at residue H198. A quinone is bound by residues H215 and 264–265 (SF). H215 lines the Fe cation pocket. Residue H272 participates in Fe cation binding. The helical transmembrane segment at 274–288 (LLAAWPVVGIWFTAL) threads the bilayer. [CaMn4O5] cluster is bound by residues H332, E333, D342, and A344. Positions 345-353 (AVEAPSTNG) are excised as a propeptide.

The protein belongs to the reaction center PufL/M/PsbA/D family. PSII is composed of 1 copy each of membrane proteins PsbA, PsbB, PsbC, PsbD, PsbE, PsbF, PsbH, PsbI, PsbJ, PsbK, PsbL, PsbM, PsbT, PsbX, PsbY, PsbZ, Psb30/Ycf12, at least 3 peripheral proteins of the oxygen-evolving complex and a large number of cofactors. It forms dimeric complexes. The cofactor is The D1/D2 heterodimer binds P680, chlorophylls that are the primary electron donor of PSII, and subsequent electron acceptors. It shares a non-heme iron and each subunit binds pheophytin, quinone, additional chlorophylls, carotenoids and lipids. D1 provides most of the ligands for the Mn4-Ca-O5 cluster of the oxygen-evolving complex (OEC). There is also a Cl(-1) ion associated with D1 and D2, which is required for oxygen evolution. The PSII complex binds additional chlorophylls, carotenoids and specific lipids.. In terms of processing, tyr-161 forms a radical intermediate that is referred to as redox-active TyrZ, YZ or Y-Z. Post-translationally, C-terminally processed by CTPA; processing is essential to allow assembly of the oxygen-evolving complex and thus photosynthetic growth.

Its subcellular location is the plastid. It localises to the chloroplast thylakoid membrane. The catalysed reaction is 2 a plastoquinone + 4 hnu + 2 H2O = 2 a plastoquinol + O2. Functionally, photosystem II (PSII) is a light-driven water:plastoquinone oxidoreductase that uses light energy to abstract electrons from H(2)O, generating O(2) and a proton gradient subsequently used for ATP formation. It consists of a core antenna complex that captures photons, and an electron transfer chain that converts photonic excitation into a charge separation. The D1/D2 (PsbA/PsbD) reaction center heterodimer binds P680, the primary electron donor of PSII as well as several subsequent electron acceptors. The protein is Photosystem II protein D1 of Dioscorea elephantipes (Elephant's foot yam).